Consider the following 474-residue polypeptide: Trigger factor (474 aa).

Positions 171–258 (GDVAVIDFQG…LKELKTRDLP (88 aa)) constitute a PPIase FKBP-type domain. The segment at 441–474 (TEVDAASATVETTATETAEEAPEAPKAKKGKKKA) is disordered. The segment covering 444-456 (DAASATVETTATE) has biased composition (low complexity).

The protein belongs to the FKBP-type PPIase family. Tig subfamily.

The protein localises to the cytoplasm. The enzyme catalyses [protein]-peptidylproline (omega=180) = [protein]-peptidylproline (omega=0). Involved in protein export. Acts as a chaperone by maintaining the newly synthesized protein in an open conformation. Functions as a peptidyl-prolyl cis-trans isomerase. This Synechococcus elongatus (strain ATCC 33912 / PCC 7942 / FACHB-805) (Anacystis nidulans R2) protein is Trigger factor.